The primary structure comprises 111 residues: Small ribosomal subunit protein bS16 (111 aa).

The interval 92 to 111 is disordered; that stretch reads MEVKAKNRKARPSKKEDKEA.

Belongs to the bacterial ribosomal protein bS16 family.

The sequence is that of Small ribosomal subunit protein bS16 from Rickettsia massiliae (strain Mtu5).